Consider the following 323-residue polypeptide: tRNA-dihydrouridine(20/20a) synthase (323 aa).

FMN-binding positions include 14–16 (PML) and Gln-66. The active-site Proton donor is the Cys-96. FMN contacts are provided by residues Lys-135, His-166, 206 to 208 (NGG), and 228 to 229 (GR).

It belongs to the Dus family. DusA subfamily. It depends on FMN as a cofactor.

It catalyses the reaction 5,6-dihydrouridine(20) in tRNA + NADP(+) = uridine(20) in tRNA + NADPH + H(+). It carries out the reaction 5,6-dihydrouridine(20) in tRNA + NAD(+) = uridine(20) in tRNA + NADH + H(+). The enzyme catalyses 5,6-dihydrouridine(20a) in tRNA + NADP(+) = uridine(20a) in tRNA + NADPH + H(+). The catalysed reaction is 5,6-dihydrouridine(20a) in tRNA + NAD(+) = uridine(20a) in tRNA + NADH + H(+). Catalyzes the synthesis of 5,6-dihydrouridine (D), a modified base found in the D-loop of most tRNAs, via the reduction of the C5-C6 double bond in target uridines. Specifically modifies U20 and U20a in tRNAs. The sequence is that of tRNA-dihydrouridine(20/20a) synthase from Haemophilus ducreyi (strain 35000HP / ATCC 700724).